The following is a 139-amino-acid chain: Transcription antitermination protein NusB (139 aa).

It belongs to the NusB family.

Functionally, involved in transcription antitermination. Required for transcription of ribosomal RNA (rRNA) genes. Binds specifically to the boxA antiterminator sequence of the ribosomal RNA (rrn) operons. The polypeptide is Transcription antitermination protein NusB (Edwardsiella ictaluri (strain 93-146)).